Consider the following 85-residue polypeptide: Translation initiation factor IF-1 2 (85 aa).

The S1-like domain maps to 1-72 (MAKEELIEMH…SKGRITFRHI (72 aa)).

This sequence belongs to the IF-1 family. As to quaternary structure, component of the 30S ribosomal translation pre-initiation complex which assembles on the 30S ribosome in the order IF-2 and IF-3, IF-1 and N-formylmethionyl-tRNA(fMet); mRNA recruitment can occur at any time during PIC assembly.

It localises to the cytoplasm. In terms of biological role, one of the essential components for the initiation of protein synthesis. Stabilizes the binding of IF-2 and IF-3 on the 30S subunit to which N-formylmethionyl-tRNA(fMet) subsequently binds. Helps modulate mRNA selection, yielding the 30S pre-initiation complex (PIC). Upon addition of the 50S ribosomal subunit IF-1, IF-2 and IF-3 are released leaving the mature 70S translation initiation complex. The polypeptide is Translation initiation factor IF-1 2 (Polaromonas sp. (strain JS666 / ATCC BAA-500)).